A 196-amino-acid chain; its full sequence is Alpha-crystallin A chain (196 aa).

Met1 bears the N-acetylmethionine mark. Residues 1–63 (MDVTIQHPWF…RTVLDSGISE (63 aa)) form a required for complex formation with BFSP1 and BFSP2 region. Gln6 carries the deamidated glutamine; partial modification. The residue at position 45 (Ser45) is a Phosphoserine. Deamidated glutamine; partial is present on Gln50. Positions 76–185 (HAGNPKNNPI…GHSERAIPVS (110 aa)) constitute a sHSP domain. N6-acetyllysine occurs at positions 93 and 122. A Zn(2+)-binding site is contributed by His123. Asn124 carries the deamidated asparagine; partial modification. Zn(2+)-binding residues include Glu125 and His130. Ser145 carries the post-translational modification Phosphoserine. Residue Asn146 is modified to Deamidated asparagine; partial. The segment at 168–196 (KVQSGLDAGHSERAIPVSREEKPSSAPSS) is disordered. Gln170 is subject to Deamidated glutamine; partial. Positions 176-190 (GHSERAIPVSREEKP) are enriched in basic and acidic residues. Zn(2+) is bound at residue His177. An O-linked (GlcNAc) serine glycan is attached at Ser185.

This sequence belongs to the small heat shock protein (HSP20) family. As to quaternary structure, heteromer composed of three CRYAA and one CRYAB subunits. Inter-subunit bridging via zinc ions enhances stability, which is crucial as there is no protein turn over in the lens. Can also form homodimers and homotetramers (dimers of dimers) which serve as the building blocks of homooligomers. Within homooligomers, the zinc-binding motif is created from residues of 3 different molecules. His-123 and Glu-125 from one molecule are ligands of the zinc ion, and His-130 and His-177 residues from additional molecules complete the site with tetrahedral coordination geometry. Part of a complex required for lens intermediate filament formation composed of BFSP1, BFSP2 and CRYAA. In terms of processing, acetylation at Lys-93 may increase chaperone activity. Undergoes age-dependent proteolytical cleavage at the C-terminus.

The protein localises to the cytoplasm. The protein resides in the nucleus. In terms of biological role, contributes to the transparency and refractive index of the lens. Acts as a chaperone, preventing aggregation of various proteins under a wide range of stress conditions. Required for the correct formation of lens intermediate filaments as part of a complex composed of BFSP1, BFSP2 and CRYAA. This is Alpha-crystallin A chain (CRYAA) from Mesocricetus auratus (Golden hamster).